The sequence spans 618 residues: UvrABC system protein C (618 aa).

The region spanning 20–98 (TAPGVYRMYA…IKSLSPRYNV (79 aa)) is the GIY-YIG domain. One can recognise a UVR domain in the interval 207 to 242 (DQLGEEIMHSMQQASEALEFERAARLRDLLSSLRSM).

It belongs to the UvrC family. In terms of assembly, interacts with UvrB in an incision complex.

Its subcellular location is the cytoplasm. In terms of biological role, the UvrABC repair system catalyzes the recognition and processing of DNA lesions. UvrC both incises the 5' and 3' sides of the lesion. The N-terminal half is responsible for the 3' incision and the C-terminal half is responsible for the 5' incision. The sequence is that of UvrABC system protein C from Xanthomonas campestris pv. campestris (strain B100).